The following is a 678-amino-acid chain: DNA gyrase subunit B (678 aa).

The 115-residue stretch at 456–570 (SELYVVEGDS…HGYVFLAQPP (115 aa)) folds into the Toprim domain. 3 residues coordinate Mg(2+): Glu462, Asp535, and Asp537.

It belongs to the type II topoisomerase GyrB family. In terms of assembly, heterotetramer, composed of two GyrA and two GyrB chains. In the heterotetramer, GyrA contains the active site tyrosine that forms a transient covalent intermediate with the DNA, while GyrB binds cofactors catalyzes ATP hydrolysis. Requires Mg(2+) as cofactor. The cofactor is Mn(2+). Ca(2+) is required as a cofactor.

The protein localises to the cytoplasm. The enzyme catalyses ATP-dependent breakage, passage and rejoining of double-stranded DNA.. Its activity is regulated as follows. DNA supercoiling is inhibited by fluoroquinolones; IC(50) 1 ug/ml for sitafloxacin. Functionally, a type II topoisomerase that negatively supercoils closed circular double-stranded (ds) DNA in an ATP-dependent manner to modulate DNA topology and maintain chromosomes in an underwound state. Negative supercoiling favors strand separation, and DNA replication, transcription, recombination and repair, all of which involve strand separation. Also able to catalyze the interconversion of other topological isomers of dsDNA rings, including catenanes and knotted rings. Type II topoisomerases break and join 2 DNA strands simultaneously in an ATP-dependent manner. The sequence is that of DNA gyrase subunit B from Mycobacterium leprae (strain TN).